Reading from the N-terminus, the 397-residue chain is Diphosphomevalonate decarboxylase (397 aa).

Residues 19–22, Arg-74, 153–158, and Thr-209 contribute to the (R)-5-diphosphomevalonate site; these read YWGK and SGSACR. Residues 378 to 397 form a disordered region; that stretch reads GPGPQDTKSSLIDPETGLPR.

Belongs to the diphosphomevalonate decarboxylase family. As to quaternary structure, homodimer.

The enzyme catalyses (R)-5-diphosphomevalonate + ATP = isopentenyl diphosphate + ADP + phosphate + CO2. It participates in isoprenoid biosynthesis; isopentenyl diphosphate biosynthesis via mevalonate pathway; isopentenyl diphosphate from (R)-mevalonate: step 3/3. In terms of biological role, diphosphomevalonate decarboxylase; part of the second module of ergosterol biosynthesis pathway that includes the middle steps of the pathway. The second module is carried out in the vacuole and involves the formation of farnesyl diphosphate, which is also an important intermediate in the biosynthesis of ubiquinone, dolichol, heme and prenylated proteins. Activity by the mevalonate kinase ERG12 first converts mevalonate into 5-phosphomevalonate. 5-phosphomevalonate is then further converted to 5-diphosphomevalonate by the phosphomevalonate kinase ERG8. The diphosphomevalonate decarboxylase MVD1/ERG19 then produces isopentenyl diphosphate. The isopentenyl-diphosphate delta-isomerase IDI1 then catalyzes the 1,3-allylic rearrangement of the homoallylic substrate isopentenyl (IPP) to its highly electrophilic allylic isomer, dimethylallyl diphosphate (DMAPP). Finally the farnesyl diphosphate synthase ERG20 catalyzes the sequential condensation of isopentenyl pyrophosphate with dimethylallyl pyrophosphate, and then with the resultant geranylpyrophosphate to the ultimate product farnesyl pyrophosphate. This chain is Diphosphomevalonate decarboxylase, found in Eremothecium gossypii (strain ATCC 10895 / CBS 109.51 / FGSC 9923 / NRRL Y-1056) (Yeast).